Here is a 156-residue protein sequence, read N- to C-terminus: MEDKMSQMESSIETIINIFHQYSVRLGHYDTLIQKEFKQLVQKELPNFLKKQKKNEAAINEIMEDLDTNVDKQLSFEEFIMLVARLTVASHEEMHNTAPPGQGHRHGPGYGKGGSGSCSGQGSPDQGSHDLGSHGHGHGHSHGGHGHSHGGHGHSH.

EF-hand domains lie at isoleucine 16–lysine 51 and lysine 54–alanine 89. Residue histidine 20 participates in Zn(2+) binding. Residues serine 23, leucine 26, and histidine 28 each contribute to the Ca(2+) site. Aspartate 30 is a binding site for Zn(2+). Residues threonine 31, glutamate 36, aspartate 67, asparagine 69, aspartate 71, glutamine 73, and glutamate 78 each contribute to the Ca(2+) site. 2 residues coordinate Zn(2+): histidine 91 and histidine 95. Positions methionine 94–histidine 156 are disordered. Residue histidine 106 is modified to Pros-methylhistidine. Positions proline 108–serine 119 are enriched in gly residues. Positions glycine 135–histidine 156 are enriched in basic residues.

Belongs to the S-100 family. Homodimer. Preferentially exists as a heterodimer or heterotetramer with S100A8 known as calprotectin (S100A8/A9). S100A9 interacts with ATP2A2. S100A9 interacts with AGER, and with the heterodimeric complex formed by TLR4 and LY96 in the presence of calcium and/or zinc ions. S100A9 binds quinoline-3-carboxamides in the presence of calcium and/or zinc ions. S100A9 interacts with amyloid-beta protein 40. Calprotectin (S100A8/9) interacts with CEACAM3 and tubulin filaments in a calcium-dependent manner. Heterotetrameric calprotectin (S100A8/A9) interacts with ANXA6 and associates with tubulin filaments in activated monocytes. Calprotectin (S100A8/9) interacts with NCF2/P67PHOX, RAC1, RAC2, CYBA and CYBB. Calprotectin (S100A8/9) interacts with NOS2 to form the iNOS-S100A8/A9 transnitrosylase complex; induced by LDL(ox). Calprotectin (S100A8/9) interacts with CD69. In terms of processing, phosphorylated. Phosphorylation inhibits activation of tubulin polymerization. Methylation at His-106 by METTL9 reduces zinc-binding without affecting heterodimerization with S100A8. Found essentially in phagocytic cells.

It localises to the secreted. The protein localises to the cytoplasm. Its subcellular location is the cytoskeleton. The protein resides in the cell membrane. Its function is as follows. S100A9 is a calcium- and zinc-binding protein which plays a prominent role in the regulation of inflammatory processes and immune response. It can induce neutrophil chemotaxis, adhesion, can increase the bactericidal activity of neutrophils by promoting phagocytosis via activation of SYK, PI3K/AKT, and ERK1/2 and can induce degranulation of neutrophils by a MAPK-dependent mechanism. Predominantly found as calprotectin (S100A8/A9) which has a wide plethora of intra- and extracellular functions. The intracellular functions include: facilitating leukocyte arachidonic acid trafficking and metabolism, modulation of the tubulin-dependent cytoskeleton during migration of phagocytes and activation of the neutrophilic NADPH-oxidase. Also participates in regulatory T-cell differentiation together with CD69. Activates NADPH-oxidase by facilitating the enzyme complex assembly at the cell membrane, transferring arachidonic acid, an essential cofactor, to the enzyme complex and S100A8 contributes to the enzyme assembly by directly binding to NCF2/P67PHOX. The extracellular functions involve pro-inflammatory, antimicrobial, oxidant-scavenging and apoptosis-inducing activities. Its pro-inflammatory activity includes recruitment of leukocytes, promotion of cytokine and chemokine production, and regulation of leukocyte adhesion and migration. Acts as an alarmin or a danger associated molecular pattern (DAMP) molecule and stimulates innate immune cells via binding to pattern recognition receptors such as Toll-like receptor 4 (TLR4) and receptor for advanced glycation endproducts (AGER). Binding to TLR4 and AGER activates the MAP-kinase and NF-kappa-B signaling pathways resulting in the amplification of the pro-inflammatory cascade. Has antimicrobial activity towards bacteria and fungi and exerts its antimicrobial activity probably via chelation of Zn(2+) which is essential for microbial growth. Can induce cell death via autophagy and apoptosis and this occurs through the cross-talk of mitochondria and lysosomes via reactive oxygen species (ROS) and the process involves BNIP3. Can regulate neutrophil number and apoptosis by an anti-apoptotic effect; regulates cell survival via ITGAM/ITGB and TLR4 and a signaling mechanism involving MEK-ERK. Its role as an oxidant scavenger has a protective role in preventing exaggerated tissue damage by scavenging oxidants. The iNOS-S100A8/A9 transnitrosylase complex is proposed to direct selective inflammatory stimulus-dependent S-nitrosylation of multiple targets such as GAPDH, NXA5, EZR, MSN and VIM by recognizing a [IL]-x-C-x-x-[DE] motif. The polypeptide is Protein S100-A9 (S100A9) (Bos taurus (Bovine)).